The chain runs to 229 residues: Large ribosomal subunit protein uL1 (229 aa).

This sequence belongs to the universal ribosomal protein uL1 family. As to quaternary structure, part of the 50S ribosomal subunit.

Functionally, binds directly to 23S rRNA. The L1 stalk is quite mobile in the ribosome, and is involved in E site tRNA release. Its function is as follows. Protein L1 is also a translational repressor protein, it controls the translation of the L11 operon by binding to its mRNA. The chain is Large ribosomal subunit protein uL1 from Clostridium acetobutylicum (strain ATCC 824 / DSM 792 / JCM 1419 / IAM 19013 / LMG 5710 / NBRC 13948 / NRRL B-527 / VKM B-1787 / 2291 / W).